A 188-amino-acid chain; its full sequence is Ribosome-recycling factor (188 aa).

It belongs to the RRF family.

It localises to the cytoplasm. Functionally, responsible for the release of ribosomes from messenger RNA at the termination of protein biosynthesis. May increase the efficiency of translation by recycling ribosomes from one round of translation to another. This Gluconacetobacter diazotrophicus (strain ATCC 49037 / DSM 5601 / CCUG 37298 / CIP 103539 / LMG 7603 / PAl5) protein is Ribosome-recycling factor.